A 294-amino-acid polypeptide reads, in one-letter code: NADH-cytochrome b5 reductase 1 (294 aa).

A helical membrane pass occupies residues 18-38 (PFIVFATVATIISAFIGYYFL). The 104-residue stretch at 51 to 154 (DEFQKFPLIE…RGPKGFFTYT (104 aa)) folds into the FAD-binding FR-type domain. Residues 134-149 (AGKNVGEHIEIRGPKG) and 160-192 (SFGMIAGGTGIAPMYQIITAILKNPEDKTKIHL) contribute to the FAD site.

The protein belongs to the flavoprotein pyridine nucleotide cytochrome reductase family. In terms of assembly, monomer. Component of the 2-(3-amino-3-carboxypropyl)histidine synthase complex composed of DPH1, DPH2, DPH3 and a NADH-dependent reductase, predominantly CBR1. FAD serves as cofactor.

The protein resides in the mitochondrion outer membrane. The catalysed reaction is 2 Fe(III)-[cytochrome b5] + NADH = 2 Fe(II)-[cytochrome b5] + NAD(+) + H(+). It carries out the reaction 2 Fe(3+)-[Dph3] + NADH = 2 Fe(2+)-[Dph3] + NAD(+) + H(+). Its pathway is protein modification; peptidyl-diphthamide biosynthesis. NADH-dependent reductase for DPH3 and cytochrome b5. Required for the first step of diphthamide biosynthesis, a post-translational modification of histidine which occurs in elongation factor 2. DPH1 and DPH2 transfer a 3-amino-3-carboxypropyl (ACP) group from S-adenosyl-L-methionine (SAM) to a histidine residue, the reaction is assisted by a reduction system comprising DPH3 and a NADH-dependent reductase, predominantly CBR1. By reducing DPH3, also involved in the formation of the tRNA wobble base modification mcm5s 2U (5-methoxycarbonylmethyl-2-thiouridine), mediated by the elongator complex. The cytochrome b5/NADH cytochrome b5 reductase electron transfer system supports the catalytic activity of several sterol biosynthetic enzymes. In Candida albicans (strain SC5314 / ATCC MYA-2876) (Yeast), this protein is NADH-cytochrome b5 reductase 1 (CBR1).